The primary structure comprises 98 residues: NADH-ubiquinone oxidoreductase chain 4L (98 aa).

The next 3 membrane-spanning stretches (helical) occupy residues 1 to 21 (MTTI…GVLI), 26 to 46 (LLST…LMAL), and 59 to 79 (APLI…ALLV).

Belongs to the complex I subunit 4L family. Core subunit of respiratory chain NADH dehydrogenase (Complex I) which is composed of 45 different subunits.

The protein localises to the mitochondrion inner membrane. It carries out the reaction a ubiquinone + NADH + 5 H(+)(in) = a ubiquinol + NAD(+) + 4 H(+)(out). Core subunit of the mitochondrial membrane respiratory chain NADH dehydrogenase (Complex I) which catalyzes electron transfer from NADH through the respiratory chain, using ubiquinone as an electron acceptor. Part of the enzyme membrane arm which is embedded in the lipid bilayer and involved in proton translocation. The chain is NADH-ubiquinone oxidoreductase chain 4L (MT-ND4L) from Rhyncholestes raphanurus (Chilean shrew opossum).